A 165-amino-acid chain; its full sequence is Crossover junction endodeoxyribonuclease RuvC (165 aa).

Active-site residues include Asp8, Glu67, and Asp139. Asp8, Glu67, and Asp139 together coordinate Mg(2+).

It belongs to the RuvC family. As to quaternary structure, homodimer which binds Holliday junction (HJ) DNA. The HJ becomes 2-fold symmetrical on binding to RuvC with unstacked arms; it has a different conformation from HJ DNA in complex with RuvA. In the full resolvosome a probable DNA-RuvA(4)-RuvB(12)-RuvC(2) complex forms which resolves the HJ. It depends on Mg(2+) as a cofactor.

It localises to the cytoplasm. The enzyme catalyses Endonucleolytic cleavage at a junction such as a reciprocal single-stranded crossover between two homologous DNA duplexes (Holliday junction).. The RuvA-RuvB-RuvC complex processes Holliday junction (HJ) DNA during genetic recombination and DNA repair. Endonuclease that resolves HJ intermediates. Cleaves cruciform DNA by making single-stranded nicks across the HJ at symmetrical positions within the homologous arms, yielding a 5'-phosphate and a 3'-hydroxyl group; requires a central core of homology in the junction. The consensus cleavage sequence is 5'-(A/T)TT(C/G)-3'. Cleavage occurs on the 3'-side of the TT dinucleotide at the point of strand exchange. HJ branch migration catalyzed by RuvA-RuvB allows RuvC to scan DNA until it finds its consensus sequence, where it cleaves and resolves the cruciform DNA. This Alkalilimnicola ehrlichii (strain ATCC BAA-1101 / DSM 17681 / MLHE-1) protein is Crossover junction endodeoxyribonuclease RuvC.